The primary structure comprises 457 residues: Neuropeptide receptor npr-1 (457 aa).

The Extracellular portion of the chain corresponds to 1-22 (MEVENFTDCQVYWKVYPDPSQS). The chain crosses the membrane as a helical span at residues 23 to 43 (IYAIVPFLTVYLFLFFLGLFG). Over 44-62 (NVTLIYVTCSHKALLSVQN) the chain is Cytoplasmic. The helical transmembrane segment at 63 to 83 (IFILNLAASDCMMCILSLPIT) threads the bilayer. Residues 84–100 (PITNVYKNWYFGNLLCH) lie on the Extracellular side of the membrane. Cys-99 and Cys-178 form a disulfide bridge. A helical membrane pass occupies residues 101–121 (LIPCIQGISIFVCTFSLGAIA). The Cytoplasmic portion of the chain corresponds to 122-140 (LDRYILVVRPHSTPLSQRG). The helical transmembrane segment at 141–161 (AFLTTVLLWILSFVVTLPYAF) threads the bilayer. The Extracellular portion of the chain corresponds to 162–193 (NMQMIEYTEERICGYFCTEKWESAKSRRAYTM). Residues 194-214 (IVMLAQFVVPFAVMAFCYANI) form a helical membrane-spanning segment. At 215 to 279 (VSVLSKRAQT…LQNRRTTSIL (65 aa)) the chain is on the cytoplasmic side. Residues 280–300 (VTMVVWFGITWLPHNVISLII) traverse the membrane as a helical segment. Topologically, residues 301 to 324 (EYDDTQSFFRLYGRDDYDISYLLN) are extracellular. The chain crosses the membrane as a helical span at residues 325–345 (LFTHSIAMSNNVLNPVLYAWL). Topologically, residues 346 to 457 (NPSFRQLVIK…IEFSVNDTLV (112 aa)) are cytoplasmic.

The protein belongs to the G-protein coupled receptor 1 family. Expressed in neurons, including neurons in the head, the ventral nerve cord, and the preanal ganglion.

It is found in the membrane. G-protein coupled receptor for FARP(FMRFamide related peptide) neuropeptides. Activated by FARP neuropeptides flp-18 and flp-21. Plays a role in modulating social and feeding behavior. Required to modulate locomotion quiescence during the sleep-like state called lethargus, which occurs during molting between larval and adult stages, in part by regulating touch sensitivity. The sequence is that of Neuropeptide receptor npr-1 from Caenorhabditis elegans.